A 507-amino-acid polypeptide reads, in one-letter code: ATP synthase subunit alpha, chloroplastic (507 aa).

170-177 (GDRQTGKT) lines the ATP pocket.

Belongs to the ATPase alpha/beta chains family. In terms of assembly, F-type ATPases have 2 components, CF(1) - the catalytic core - and CF(0) - the membrane proton channel. CF(1) has five subunits: alpha(3), beta(3), gamma(1), delta(1), epsilon(1). CF(0) has four main subunits: a, b, b' and c.

The protein localises to the plastid. The protein resides in the chloroplast thylakoid membrane. It carries out the reaction ATP + H2O + 4 H(+)(in) = ADP + phosphate + 5 H(+)(out). Produces ATP from ADP in the presence of a proton gradient across the membrane. The alpha chain is a regulatory subunit. This is ATP synthase subunit alpha, chloroplastic from Acorus calamus var. americanus (American sweet flag).